We begin with the raw amino-acid sequence, 509 residues long: Dihydrolipoyl dehydrogenase, mitochondrial (509 aa).

Residues 1-35 constitute a mitochondrion transit peptide; it reads MQSWSRVYCTLAKRGHFNRIAHGLQGVSAVPLRTY. Position 66 is an N6-acetyllysine; alternate (Lys66). Position 66 is an N6-succinyllysine; alternate (Lys66). Residues 71–80 and Lys89 each bind FAD; that span reads EKNETLGGTC. A disulfide bond links Cys80 and Cys85. An N6-acetyllysine; alternate mark is found at Lys104, Lys122, Lys132, and Lys143. N6-succinyllysine; alternate is present on residues Lys104, Lys122, Lys132, and Lys143. Gly154 provides a ligand contact to FAD. N6-succinyllysine occurs at positions 159 and 166. 183–185 contributes to the FAD binding site; the sequence is TGS. Residues 220–227 and Glu243 each bind NAD(+); that span reads GAGVIGVE. Lys273 and Lys277 each carry N6-succinyllysine. Residue Val278 participates in NAD(+) binding. 2 positions are modified to phosphoserine: Ser285 and Ser297. Gly314 serves as a coordination point for NAD(+). The residue at position 346 (Lys346) is an N6-acetyllysine. FAD is bound by residues Asp355 and 361–364; that span reads MLAH. Position 410 is an N6-acetyllysine; alternate (Lys410). N6-succinyllysine; alternate is present on Lys410. 2 positions are modified to N6-acetyllysine: Lys417 and Lys420. N6-succinyllysine is present on Lys430. His487 acts as the Proton acceptor in catalysis. Ser502 carries the post-translational modification Phosphoserine. Lys505 carries the N6-acetyllysine; alternate modification. Lys505 carries the N6-succinyllysine; alternate modification.

It belongs to the class-I pyridine nucleotide-disulfide oxidoreductase family. As to quaternary structure, homodimer. Part of the multimeric pyruvate dehydrogenase complex that contains multiple copies of pyruvate dehydrogenase (subunits PDHA (PDHA1 or PDHA2) and PDHB, E1), dihydrolipoamide acetyltransferase (DLAT, E2) and lipoamide dehydrogenase (DLD, E3). These subunits are bound to an inner core composed of about 48 DLAT and 12 PDHX molecules (by non covalent bonds). The 2-oxoglutarate dehydrogenase complex is composed of OGDH (2-oxoglutarate dehydrogenase; E1), DLST (dihydrolipoamide succinyltransferase; E2), DLD (dihydrolipoamide dehydrogenase; E3) and the assembly factor KGD4. It contains multiple copies of the three enzymatic components (E1, E2 and E3). In the nucleus, the 2-oxoglutarate dehydrogenase complex associates with KAT2A. Interacts with PDHX. It depends on FAD as a cofactor. In terms of processing, tyrosine phosphorylated. In terms of tissue distribution, expressed in heart (at protein level).

It localises to the mitochondrion matrix. It is found in the nucleus. The protein resides in the cell projection. The protein localises to the cilium. Its subcellular location is the flagellum. It localises to the cytoplasmic vesicle. It is found in the secretory vesicle. The protein resides in the acrosome. It carries out the reaction N(6)-[(R)-dihydrolipoyl]-L-lysyl-[protein] + NAD(+) = N(6)-[(R)-lipoyl]-L-lysyl-[protein] + NADH + H(+). In terms of biological role, lipoamide dehydrogenase is a component of the glycine cleavage system as well as an E3 component of three alpha-ketoacid dehydrogenase complexes (pyruvate-, alpha-ketoglutarate-, and branched-chain amino acid-dehydrogenase complex). The 2-oxoglutarate dehydrogenase complex is mainly active in the mitochondrion. A fraction of the 2-oxoglutarate dehydrogenase complex also localizes in the nucleus and is required for lysine succinylation of histones: associates with KAT2A on chromatin and provides succinyl-CoA to histone succinyltransferase KAT2A. In monomeric form may have additional moonlighting function as serine protease. Involved in the hyperactivation of spermatazoa during capacitation and in the spermatazoal acrosome reaction. The chain is Dihydrolipoyl dehydrogenase, mitochondrial (DLD) from Sus scrofa (Pig).